The sequence spans 112 residues: Integration host factor subunit alpha (112 aa).

This sequence belongs to the bacterial histone-like protein family. In terms of assembly, heterodimer of an alpha and a beta chain.

Functionally, this protein is one of the two subunits of integration host factor, a specific DNA-binding protein that functions in genetic recombination as well as in transcriptional and translational control. The protein is Integration host factor subunit alpha of Rhizobium johnstonii (strain DSM 114642 / LMG 32736 / 3841) (Rhizobium leguminosarum bv. viciae).